The chain runs to 600 residues: Glutamine--fructose-6-phosphate aminotransferase [isomerizing] (600 aa).

Cys2 acts as the Nucleophile; for GATase activity in catalysis. The Glutamine amidotransferase type-2 domain maps to Cys2–Glu217. 2 consecutive SIS domains span residues Ile283 to Glu422 and Leu452 to Pro590. The For Fru-6P isomerization activity role is filled by Lys595.

As to quaternary structure, homodimer.

It is found in the cytoplasm. The enzyme catalyses D-fructose 6-phosphate + L-glutamine = D-glucosamine 6-phosphate + L-glutamate. Its function is as follows. Catalyzes the first step in hexosamine metabolism, converting fructose-6P into glucosamine-6P using glutamine as a nitrogen source. The polypeptide is Glutamine--fructose-6-phosphate aminotransferase [isomerizing] (Bacillus cereus (strain ATCC 14579 / DSM 31 / CCUG 7414 / JCM 2152 / NBRC 15305 / NCIMB 9373 / NCTC 2599 / NRRL B-3711)).